A 137-amino-acid polypeptide reads, in one-letter code: Large ribosomal subunit protein uL16 (137 aa).

It belongs to the universal ribosomal protein uL16 family. Part of the 50S ribosomal subunit.

Functionally, binds 23S rRNA and is also seen to make contacts with the A and possibly P site tRNAs. The chain is Large ribosomal subunit protein uL16 from Pseudomonas paraeruginosa (strain DSM 24068 / PA7) (Pseudomonas aeruginosa (strain PA7)).